Reading from the N-terminus, the 1064-residue chain is mRNA 3'-end-processing protein RNA14 (1064 aa).

Disordered stretches follow at residues 34 to 106 and 119 to 192; these read ASQS…APSA and SETP…ASAV. Residues 44 to 54 are compositionally biased toward polar residues; it reads AQDQKSHSTLL. Low complexity-rich tracts occupy residues 66–86 and 151–191; these read SAIPAAPGSSSTAAASDAIGD and QPAE…AASA. HAT repeat units lie at residues 327 to 364, 377 to 412, 423 to 456, 673 to 706, and 777 to 811; these read SNFAEVEAIFASTLKGSAGITTAADVSIWAAYLHYIRR, DVRSTITEAYEFALRECGFDRESGDIWDEYIKFVAS, AKNDNLRKIYQRAVCIPLNNIEALWKSYDNFESS, QRGALVAQRRGKDIEELMVGISVVWIMYMRFARR, and NDDNNARALFERSVVRIMGDKARPLWDAWARYEYT. 2 disordered regions span residues 888–985 and 1022–1064; these read AVPT…DRSG and LPGA…SGRY. Basic and acidic residues-rich tracts occupy residues 899-910 and 933-948; these read SYKRPAPEDIPP and RYPERDDRPPPGRYRD. A compositionally biased stretch (pro residues) spans 1026 to 1042; it reads GMPPAPPISRGPPPPPM.

It localises to the nucleus. It is found in the cytoplasm. In terms of biological role, component of the cleavage factor IA (CFIA) complex, which is involved in the endonucleolytic cleavage during polyadenylation-dependent pre-mRNA 3'-end formation. The sequence is that of mRNA 3'-end-processing protein RNA14 (RNA14) from Cryptococcus neoformans var. neoformans serotype D (strain B-3501A) (Filobasidiella neoformans).